A 298-amino-acid chain; its full sequence is MATH domain and coiled-coil domain-containing protein At3g58280 (298 aa).

The region spanning 9–128 (KKTFGWVIKD…NGEITIIAEV (120 aa)) is the MATH domain. Positions 240 to 288 (NLDWLRQKFDQALEKQIAYDTRIGELEKQVKKRKLAVTELEADLEKEKA) form a coiled coil.

The chain is MATH domain and coiled-coil domain-containing protein At3g58280 from Arabidopsis thaliana (Mouse-ear cress).